A 95-amino-acid chain; its full sequence is Protein TusB (95 aa).

Belongs to the DsrH/TusB family. Heterohexamer, formed by a dimer of trimers. The hexameric TusBCD complex contains 2 copies each of TusB, TusC and TusD. The TusBCD complex interacts with TusE.

Its subcellular location is the cytoplasm. In terms of biological role, part of a sulfur-relay system required for 2-thiolation of 5-methylaminomethyl-2-thiouridine (mnm(5)s(2)U) at tRNA wobble positions. The polypeptide is Protein TusB (Salmonella dublin (strain CT_02021853)).